Consider the following 150-residue polypeptide: 2-aminobenzenesulfonate 2,3-dioxygenase subunit beta (150 aa).

The protein belongs to the bacterial ring-hydroxylating dioxygenase beta subunit family. As to quaternary structure, heterotetramer with a alpha2beta2 structure.

It carries out the reaction 2-aminobenzenesulfonate + NADH + O2 + 2 H(+) = 2,3-dihydroxybenzenesulfonate + NH4(+) + NAD(+). Inhibited by o-phenanthroline. Functionally, beta subunit of the oxygenase component of the 2-aminobenzenesulfonate 2,3-dioxygenase system (deaminating) (ABSDOS). Can use 2-aminobenzenesulfonate (ABS), benzenesulfonate (BS), 4-toluenesulfonate (TS), 2-nitrobenzenesulfonate, 3- and 4-aminobenzenesulfonates, 4-chloro- and 4-hydroxybenzenesulfonates and pyridine-3-sulfonate as substrates. No desulfonation of ABS to aminocatechol or aminophenol detected. The sequence is that of 2-aminobenzenesulfonate 2,3-dioxygenase subunit beta from Alcaligenes sp.